Reading from the N-terminus, the 142-residue chain is Small ribosomal subunit protein bS6 (142 aa).

A compositionally biased stretch (basic and acidic residues) spans 110-133; sequence NKKPSHAKEKHEKTEHTHSHHTEE. Residues 110 to 142 form a disordered region; that stretch reads NKKPSHAKEKHEKTEHTHSHHTEETESVGSHSK.

It belongs to the bacterial ribosomal protein bS6 family.

In terms of biological role, binds together with bS18 to 16S ribosomal RNA. The polypeptide is Small ribosomal subunit protein bS6 (Helicobacter pylori (strain Shi470)).